A 124-amino-acid chain; its full sequence is Ribonuclease P protein component (124 aa).

It belongs to the RnpA family. Consists of a catalytic RNA component (M1 or rnpB) and a protein subunit.

The enzyme catalyses Endonucleolytic cleavage of RNA, removing 5'-extranucleotides from tRNA precursor.. RNaseP catalyzes the removal of the 5'-leader sequence from pre-tRNA to produce the mature 5'-terminus. It can also cleave other RNA substrates such as 4.5S RNA. The protein component plays an auxiliary but essential role in vivo by binding to the 5'-leader sequence and broadening the substrate specificity of the ribozyme. The sequence is that of Ribonuclease P protein component from Maridesulfovibrio salexigens (strain ATCC 14822 / DSM 2638 / NCIMB 8403 / VKM B-1763) (Desulfovibrio salexigens).